Reading from the N-terminus, the 427-residue chain is Kynureninase (427 aa).

Residues Thr-104, Thr-105, 132-135, Asp-213, His-216, and Tyr-238 each bind pyridoxal 5'-phosphate; that span reads FPSD. Lys-239 carries the post-translational modification N6-(pyridoxal phosphate)lysine. Residues Trp-267 and Thr-295 each contribute to the pyridoxal 5'-phosphate site.

Belongs to the kynureninase family. Homodimer. Pyridoxal 5'-phosphate serves as cofactor.

The enzyme catalyses L-kynurenine + H2O = anthranilate + L-alanine + H(+). The catalysed reaction is 3-hydroxy-L-kynurenine + H2O = 3-hydroxyanthranilate + L-alanine + H(+). It functions in the pathway amino-acid degradation; L-kynurenine degradation; L-alanine and anthranilate from L-kynurenine: step 1/1. It participates in cofactor biosynthesis; NAD(+) biosynthesis; quinolinate from L-kynurenine: step 2/3. Catalyzes the cleavage of L-kynurenine (L-Kyn) and L-3-hydroxykynurenine (L-3OHKyn) into anthranilic acid (AA) and 3-hydroxyanthranilic acid (3-OHAA), respectively. The polypeptide is Kynureninase (Shouchella clausii (strain KSM-K16) (Alkalihalobacillus clausii)).